A 420-amino-acid polypeptide reads, in one-letter code: WD repeat-containing protein 21 (420 aa).

The DDB-boX motif lies at Arg73 to Phe75. WD repeat units follow at residues Gln251–Gln289, His293–Arg332, and Gly341–Glu383.

It localises to the cytoplasm. Its subcellular location is the nucleus. The chain is WD repeat-containing protein 21 (wdr21) from Schizosaccharomyces pombe (strain 972 / ATCC 24843) (Fission yeast).